The primary structure comprises 651 residues: Protein cueball (651 aa).

The signal sequence occupies residues 1–21 (MILRLFILLSIITVYLQLSVG). Over 22 to 540 (IQQQFEFAIT…VCLAPNAWTG (519 aa)) the chain is Extracellular. N-linked (GlcNAc...) asparagine glycans are attached at residues Asn77, Asn102, and Asn114. LDL-receptor class B repeat units lie at residues 115-162 (RTIY…DICG), 163-207 (RKLY…DQGA), and 208-253 (KRIF…TRNA). Residue Asn183 is glycosylated (N-linked (GlcNAc...) asparagine). The disordered stretch occupies residues 290–311 (VEGEEGTGAMDDNDIWPVGDFE). Asn324 is a glycosylation site (N-linked (GlcNAc...) asparagine). 3 EGF-like domains span residues 374-408 (QLDELQREHCLGGGTYYPQQKFCVCVPGYKGTRCE), 409-440 (TNECHNFCVHGTCQISEMGYPKCYCQPGYSGE), and 443-480 (EVKKCLNFCQNGGDCQLDELTGEASCQCPSNFGGLRCE). 7 disulfides stabilise this stretch: Cys383–Cys396, Cys398–Cys407, Cys412–Cys421, Cys416–Cys431, Cys447–Cys457, Cys451–Cys468, and Cys470–Cys479. N-linked (GlcNAc...) asparagine glycosylation is found at Asn482 and Asn499. Residues 541–561 (SVLMPLMISLILILLLLTIFI) form a helical membrane-spanning segment. Residues 562–651 (HGLRRLYKPK…LIHNMEDDLY (90 aa)) lie on the Cytoplasmic side of the membrane.

Belongs to the cueball family.

The protein localises to the cell membrane. Has a role in spermatogenesis and oogenesis. The sequence is that of Protein cueball from Drosophila willistoni (Fruit fly).